Consider the following 478-residue polypeptide: GTPase Obg (478 aa).

The Obg domain maps to Thr2–Val159. Residues Tyr60–Val88 are disordered. In terms of domain architecture, OBG-type G spans Ala160 to Ala330. GTP is bound by residues Gly166 to Ser173, Phe191 to Val195, Asp212 to Gly215, Asn282 to Asp285, and Ser311 to Val313. The Mg(2+) site is built by Ser173 and Thr193. The region spanning Pro348–Pro430 is the OCT domain. Residues Met438–Phe478 are disordered. Basic and acidic residues-rich tracts occupy residues Leu439–Ala450 and Arg457–Ala468. The span at Gln469–Phe478 shows a compositional bias: acidic residues.

The protein belongs to the TRAFAC class OBG-HflX-like GTPase superfamily. OBG GTPase family. As to quaternary structure, monomer. It depends on Mg(2+) as a cofactor.

It localises to the cytoplasm. The protein localises to the cell membrane. Plays an unknown essential role and a regulatory role in sporulation. Overexpression suppresses sporulation although cell growth rate was not reduced. Impaired differentiation was eliminated by addition of decoyinine, an inhibitor of GMP synthesis. Overexpression has no effect on undecylprodigiosin production, but decreases actinorhodin production. In terms of biological role, an essential GTPase which binds GTP, GDP and possibly (p)ppGpp with moderate affinity, with high nucleotide exchange rates and a fairly low GTP hydrolysis rate. Plays a role in control of the cell cycle, stress response, ribosome biogenesis and in those bacteria that undergo differentiation, in morphogenesis control. This is GTPase Obg from Streptomyces coelicolor (strain ATCC BAA-471 / A3(2) / M145).